The chain runs to 968 residues: MPFTLGQRWISDTESELGLGTVVALDARMVTIMFPATGENRLYARNDSPVTRVMFNPGDTVTSHEGWQLKIEDVKEENGLLAYTGTRLDTDEADVMLREVMLDSRLVFSKPQDRLFAGQIDRMDRFSLRYRARKFQSEQYRMPWSGLRGQRTSLIPHQLNIAHDVGRRHAPRVLLADEVGLGKTIEAGMILHQQLLSGAAERVLIVVPETLQHQWLVEMLRRFNLRFSLFDDERYAEAQHDADNPFETEQLVICSLDFVRRSKQRLEHLCDAEWDLLVVDEAHHLVWSENAPSREYMAIEQLAERVPGILLLTATPEQLGLESHFARLRLLDPNRFHDFDVFVEEQQNYRPVADAVAMLLAGKHLSNDELNTLSDLIGEQDIEPLLHTANSDRDGADAARQELVSMLMDRHGTSRVLFRNTRNGVKGFPKRELHTIKLPLPTQYQTAIKVSGIMGARKSAEERARDMLYPEQIYQEFEGDTGTWWNFDPRVEWLMGYLTAHRSQKVLVICAKAATALQLEQVLREREGIRAAVFHEGMSIIERDRAAAWFGEEDSGAQVLLCSEIGSEGRNFQFASKLVMFDLPFNPDLLEQRIGRLDRIGQAHDIQIHVPYLENTAQSVLVRWFHEGLDAFEHTCPTGRTIYDQVHSDLIGYLASPENTDGFDDLIKTCREKHDALKIQLEQGRDRLLEIHSNGGEKAQALAESIEEQDDDTSLISFAMNLFDIVGINQDDRGENMIVLTPSDHMLVPDFPGLPEDGCTITFERDVALSREDAQFITWEHPLIRNGLDLILSGDTGSSTISLLKNKALPVGTLLLELIYVVEAQAPKQLQLNRFLPATPVRLMLDKNGTNLAAQVEFESFNRQLSAVNRHTGSKLVNAVQQDVHAILQQGEAQIEKAARALIDSARREADEKLSAELSRLEALRAVNPNIRDDELAAIESNRQQVLESLDQASWRLDALRLIVVTHQ.

Positions 164 to 334 constitute a Helicase ATP-binding domain; that stretch reads DVGRRHAPRV…FARLRLLDPN (171 aa). Residue 177 to 184 participates in ATP binding; sequence DEVGLGKT. Positions 280 to 283 match the DEAH box motif; it reads DEAH. In terms of domain architecture, Helicase C-terminal spans 490–644; sequence RVEWLMGYLT…TCPTGRTIYD (155 aa).

Belongs to the SNF2/RAD54 helicase family. RapA subfamily. As to quaternary structure, interacts with the RNAP. Has a higher affinity for the core RNAP than for the holoenzyme. Its ATPase activity is stimulated by binding to RNAP.

Functionally, transcription regulator that activates transcription by stimulating RNA polymerase (RNAP) recycling in case of stress conditions such as supercoiled DNA or high salt concentrations. Probably acts by releasing the RNAP, when it is trapped or immobilized on tightly supercoiled DNA. Does not activate transcription on linear DNA. Probably not involved in DNA repair. The chain is RNA polymerase-associated protein RapA from Enterobacter sp. (strain 638).